A 260-amino-acid chain; its full sequence is MQGQNQQQAYDRGITIFSPDGRLYQVEYAREAVKRGTASIGVRTSDGVVLAVDKRIRSPLMERSSVEKIHKADDHIGIASAGHVADARQLIDFARRQAQVNQLRYGEPVGVETLTKEITDYIQQYTQVGGARPFGVALIIGGIVNGEPRLFETDPSGTPYEWKALAVGADRGDIRDYLEEHYDEGMDLDEGVDLALAALASVNDDELSPEGIGVATVDVETETFGQLTDEEKEAHLAEADLLDTGEDADDEAEDEDATEE.

Residues 237–260 (AEADLLDTGEDADDEAEDEDATEE) form a disordered region. The span at 240–260 (DLLDTGEDADDEAEDEDATEE) shows a compositional bias: acidic residues.

This sequence belongs to the peptidase T1A family. In terms of assembly, the 20S proteasome core is composed of 14 alpha and 14 beta subunits that assemble into four stacked heptameric rings, resulting in a barrel-shaped structure. The two inner rings, each composed of seven catalytic beta subunits, are sandwiched by two outer rings, each composed of seven alpha subunits. The catalytic chamber with the active sites is on the inside of the barrel. Has a gated structure, the ends of the cylinder being occluded by the N-termini of the alpha-subunits. Is capped at one or both ends by the proteasome regulatory ATPase, PAN.

The protein resides in the cytoplasm. The formation of the proteasomal ATPase PAN-20S proteasome complex, via the docking of the C-termini of PAN into the intersubunit pockets in the alpha-rings, triggers opening of the gate for substrate entry. Interconversion between the open-gate and close-gate conformations leads to a dynamic regulation of the 20S proteasome proteolysis activity. Functionally, component of the proteasome core, a large protease complex with broad specificity involved in protein degradation. The sequence is that of Proteasome subunit alpha 1 from Haloarcula marismortui (strain ATCC 43049 / DSM 3752 / JCM 8966 / VKM B-1809) (Halobacterium marismortui).